The sequence spans 266 residues: Small ribosomal subunit protein uS2 (266 aa).

This sequence belongs to the universal ribosomal protein uS2 family.

The chain is Small ribosomal subunit protein uS2 from Paramagnetospirillum magneticum (strain ATCC 700264 / AMB-1) (Magnetospirillum magneticum).